We begin with the raw amino-acid sequence, 407 residues long: Tryptophan synthase beta chain (407 aa).

Lysine 86 is subject to N6-(pyridoxal phosphate)lysine.

The protein belongs to the TrpB family. In terms of assembly, tetramer of two alpha and two beta chains. Pyridoxal 5'-phosphate is required as a cofactor.

The catalysed reaction is (1S,2R)-1-C-(indol-3-yl)glycerol 3-phosphate + L-serine = D-glyceraldehyde 3-phosphate + L-tryptophan + H2O. The protein operates within amino-acid biosynthesis; L-tryptophan biosynthesis; L-tryptophan from chorismate: step 5/5. The beta subunit is responsible for the synthesis of L-tryptophan from indole and L-serine. The protein is Tryptophan synthase beta chain of Shewanella woodyi (strain ATCC 51908 / MS32).